Here is a 1641-residue protein sequence, read N- to C-terminus: MRDRVAMMLRPLVRGWIPRAVLLLTVAFSFGCNRNHNGQLPQSSGEPVAVAKEPVKGFVLVRAYPDQHDGELALALEFSQPLAATQEFDTLVRLEQDSGNHDGGWSLSDDAKTLRYPYVEADKHYTVLISAGLLAATGSRLGKPRKEPVYTGELDPVVGFASRGSILPARGSRGVPVVSVNVPEVDVEFMRVREKALPAFLARYHKAGQRSSWELSNQGNSRKRLSELADPVYVTRFVLDGKKNERALTYLPIQSIRELREPGLYFAVMKPTGSFSDAFETAFFSVSNIGLHTRAYKDKLFVHTASLRSGNPYKQVDLLVLDAKGETVLQGATDDNGNALLNYTLNAGHVLVSRNGRDISILPFNQPALDLSEFAVAGRENPWFDVFAWSGRDLYRPGETLRISALLRDRDGKPVKPQPVFLRLKQPDGKTFRETRLQPAEQGYLEFTQKIPSDAPTGRWRVEFRTDPASKEAVQGLAVRVEEFLPERMKLELSSAQPVLRAKAPFTLTADAAYLYGAPAAGNRFTANLAVAVEQHPLDNMPGWFFGDATLQLPRGAKETIDITLGADGHLVHDIVLPEEAKPVSPMAVVVSGSVYESGGRPVTRSLKRVLWPADALVGVRPLFDVASGADANGMARFELTRVGVDGKPQSAKGLKATLVRELRDYHWRYSDGRWDYDFTRRFENKETRTVDISTSHTTTLALPVEWGDYRLEVFDPVTGLTMRYPFRAGWSWGDDNRGLDARPDKVKLALDKTSYRAGDTLKVTITPPHPGKGLLLVESDKPLYVQAIDANPSTTLEIPVTADWERHDVYVTALVFRGGSASNNTTPARAVGEVYVPMQRKDRRVAVGLVVPKQMRPAQSLPVTVSVPELAGKQAHVTISAVDAGILNITGFPVPDAAAHFFAQRRLSVDAYDIYGRVIESFEGGTGRLKFGGDMALPPLPQAKRPTARSQTVDLFSGAVKLDAKGNAHIQLPVPDFNGALRVSALVYSDTRYGQRDAETVVRAPILAEASMPRVMAPGDRSTVTVDVQNFTGKQGKFAVKVEGVGPLAVAEAGRSVTLGIDGKTTLNFPLRALEGNSVAQVRVRVEGNGSKAERHYDLPVRAAWPQGLRTQAHVLNVLAPIAFDPALAKGLMPDSVNARLSVSALAPIPFASVLQGVFEYPYGCAEQTASKGYAALWLDDATIKSLGIHGVTPAQRLERLEGALGRLASLQTMNGHFSMCGGNSDVNPVLTPYIAGFLLDAKDAGFAVSDAVLQKALNRLSEDLLSGAHLFYGNDQSEALMFAHQAWSGYVLARVNRAPLGTLRTLYDNERGKAVSGLSLVHLGVALSLQGDRKRGEAAIEAGFAKSEGGRPEVFGDYGSVIRDNALMIALVRAHGLAKPAYEARVMALGRDLEARRRSGWLWLSTQEQVALAQLGRALLVDQKKQVSGTLYVGKQREEIAASRLIGRSFDAAALARGVRFVPQGDVPLYASFEVAGIPRQAPVSDDSQLLVVRRWYTVDGKPWTPGPLKEGQALIVRVSVTSKQNMPDALLTDLLPAGLEIDNFNLGETRQWADVTVDGIALSERANAADIKHEEFRDDRYVAMLQLTGGRTANLFYLVRAVTPGTYKVPPSLVEDMYRPALRGTGRVAPATVTVVQP.

The N-terminal stretch at 1–31 is a signal peptide; sequence MRDRVAMMLRPLVRGWIPRAVLLLTVAFSFG. Cysteine 32 carries the N-palmitoyl cysteine lipid modification. Residue cysteine 32 is the site of S-diacylglycerol cysteine attachment. The segment at residues 1166 to 1169 is a cross-link (isoglutamyl cysteine thioester (Cys-Gln)); that stretch reads CAEQ.

The protein belongs to the protease inhibitor I39 (alpha-2-macroglobulin) family. Bacterial alpha-2-macroglobulin subfamily.

It localises to the cell membrane. Functionally, protects the bacterial cell from host peptidases. This Xylella fastidiosa (strain 9a5c) protein is Alpha-2-macroglobulin.